A 466-amino-acid polypeptide reads, in one-letter code: Argininosuccinate lyase (466 aa).

Residues Ser27, Asn114, and Thr159 each contribute to the 2-(N(omega)-L-arginino)succinate site. His160 acts as the Proton acceptor in catalysis. Catalysis depends on Ser281, which acts as the Proton donor. 2-(N(omega)-L-arginino)succinate is bound by residues Asn289, Tyr321, Gln326, and Lys329.

It belongs to the lyase 1 family. Argininosuccinate lyase subfamily. Homotetramer. The N-terminus is blocked. As to expression, eye lens.

It catalyses the reaction 2-(N(omega)-L-arginino)succinate = fumarate + L-arginine. It functions in the pathway amino-acid biosynthesis; L-arginine biosynthesis; L-arginine from L-ornithine and carbamoyl phosphate: step 3/3. Its function is as follows. Delta crystallin, the principal crystallin in embryonic lens, is found only in birds and reptiles. This protein also functions as an enzymatically active argininosuccinate lyase, but it has a low activity. In Columba livia (Rock dove), this protein is Argininosuccinate lyase (ASL).